The following is a 297-amino-acid chain: Translocase of chloroplast 33, chloroplastic (297 aa).

Residues 34–258 (MNSMTVLVLG…HVDKKMVDGS (225 aa)) enclose the AIG1-type G domain. Residues 37 to 53 (MTVLVLGKGGVGKSSTV) form a helical membrane-spanning segment. GTP-binding positions include 46–51 (GVGKSS) and 65–70 (SPFQAE). Mg(2+)-binding residues include serine 50 and glutamine 68. Homodimerization regions lie at residues 65-68 (SPFQ) and 125-130 (RLDVYR). Histidine 160 provides a ligand contact to GTP. Serine 181 is subject to Phosphoserine. 208 to 209 (EN) contributes to the GTP binding site.

It belongs to the TRAFAC class TrmE-Era-EngA-EngB-Septin-like GTPase superfamily. AIG1/Toc34/Toc159-like paraseptin GTPase family. TOC34 subfamily. In terms of assembly, homodimer, heterodimer with TOC34 and TOC159, and monomer. The homodimerization and the dimerization with TOC159 require the binding of GTP on Arg-130, and a hypothetical coGAP factor. The dimeric form has a higher GTPase activity than the monomeric form. Part of the TOC core complex that includes 1 protein for the specific recognition of transit peptides surrounded by a ring composed of four proteins forming translocation channels, and four to five GTP-binding proteins providing energy. This core complex can interact with components of the TIC complex to form a larger import complex. Chloroplastic protein precursor such as prSS (precursor of the RuBisCO small subunit) interacts with these complexes. The TOC complex contains a specific subset of polar lipids such as digalactosyldiacylglyceride (DGDG), phosphatidylcholine (PC) and phosphatidylglycerol (PG). Interacts at least with TOC75-3. Forms large complexes including TOC33, pPORA and OEP161 during pPORA import into plastids at the plastid envelope membrane. Interacts with SP1. The cofactor is Mg(2+). Phosphorylated by a kinase present in the outer envelope of chloroplast. When Ser-181 is phosphorylated, the binding to preprotein, GTP and GDP is inhibited, and thus, GTPase activity is repressed. As to expression, mostly expressed in seedlings and flowers, and, to a lower extent, in roots, stems, and leaves.

Its subcellular location is the plastid. The protein resides in the chloroplast outer membrane. Its function is as follows. GTPase involved in protein precursor import into chloroplasts. Seems to recognize chloroplast-destined precursor proteins and regulate their presentation to the translocation channel through GTP hydrolysis. Binds GTP, GDP, XTP, but not ATP. Probably specialized in the import of nuclear encoded photosynthetic preproteins from the cytoplasm to the chloroplast, especially during early development stages. The protein is Translocase of chloroplast 33, chloroplastic (TOC33) of Arabidopsis thaliana (Mouse-ear cress).